The chain runs to 341 residues: HTH-type transcriptional repressor PurR (341 aa).

Residues 2-56 form the HTH lacI-type domain; that stretch reads ATIKDVAKRAGVSTTTVSHVINKTRFVAEETKAAVRAAIKELHYSPSAVARSLKV. Residues 4–23 constitute a DNA-binding region (H-T-H motif); the sequence is IKDVAKRAGVSTTTVSHVIN. Residues 48-56 mediate DNA binding; sequence SAVARSLKV. Hypoxanthine-binding residues include Y73, R190, T192, F221, and D275.

As to quaternary structure, homodimer.

It functions in the pathway purine metabolism; purine nucleotide biosynthesis [regulation]. Functionally, is the main repressor of the genes involved in the de novo synthesis of purine nucleotides, regulating purB, purC, purEK, purF, purHD, purL, purMN and guaBA expression. PurR is allosterically activated to bind its cognate DNA by binding the purine corepressors, hypoxanthine or guanine, thereby effecting transcription repression. In Pectobacterium carotovorum subsp. carotovorum (strain PC1), this protein is HTH-type transcriptional repressor PurR.